We begin with the raw amino-acid sequence, 474 residues long: MTEVTIHQVPEMRRIRRIHFVGIGGAGMSGIAEVLLNQGYEISGSDLRESDVTRRLAGMGVHVFIGHHATNVDGASVVVNSSAVESGNPELMEAREKRIPIVRRAEMLGELMRYRHGIAVAGTHGKTTTTSLISSILAAGKKDPTFIIGGLLNSAGSNAGLGESRYLVAEADESDASFLHLQPMVSVVTNIDADHMDTYEGDFSKLKQTFIDFLHNLPFYGLAVVCGDDPIVTELIPAISRSVVTYGFNEDSDYRAFDVRQDGSKLRFKVARPEGLATLELFLNMPGKHNVLNATAAVAVASEEKVDDDAIQNGLANFMGVGRRFEIYGEFEVGAGPTAMLVDDYGHHPREVAATIAAVRDGWPDRRLVMVYQPHRYSRTRDLYEDFVEVLSTVDQLVLLEVYSAGEDPIPGADSRHLSRTIRTRGVVDPIFVEGVEGVPAVIKDIVQPGDIIITQGAGNVGTLAKELAKRNLG.

Residue glycine 122 to threonine 128 coordinates ATP.

Belongs to the MurCDEF family.

It is found in the cytoplasm. It carries out the reaction UDP-N-acetyl-alpha-D-muramate + L-alanine + ATP = UDP-N-acetyl-alpha-D-muramoyl-L-alanine + ADP + phosphate + H(+). It functions in the pathway cell wall biogenesis; peptidoglycan biosynthesis. Cell wall formation. In Saccharophagus degradans (strain 2-40 / ATCC 43961 / DSM 17024), this protein is UDP-N-acetylmuramate--L-alanine ligase.